A 315-amino-acid chain; its full sequence is Ribosomal RNA small subunit methyltransferase H (315 aa).

S-adenosyl-L-methionine contacts are provided by residues Gly34–His36, Asp53, Asp100, and His107.

The protein belongs to the methyltransferase superfamily. RsmH family.

It localises to the cytoplasm. It catalyses the reaction cytidine(1402) in 16S rRNA + S-adenosyl-L-methionine = N(4)-methylcytidine(1402) in 16S rRNA + S-adenosyl-L-homocysteine + H(+). Its function is as follows. Specifically methylates the N4 position of cytidine in position 1402 (C1402) of 16S rRNA. This is Ribosomal RNA small subunit methyltransferase H from Treponema denticola (strain ATCC 35405 / DSM 14222 / CIP 103919 / JCM 8153 / KCTC 15104).